An 80-amino-acid polypeptide reads, in one-letter code: DNA-binding protein HU-like (80 aa).

It belongs to the bacterial histone-like protein family.

Its function is as follows. Histone-like DNA-binding protein which is capable of wrapping DNA to stabilize it, and thus to prevent its denaturation under extreme environmental conditions. This chain is DNA-binding protein HU-like, found in Rickettsia prowazekii (strain Madrid E).